We begin with the raw amino-acid sequence, 1365 residues long: Patatin-like phospholipase domain-containing protein 6 (1365 aa).

Topologically, residues 1–50 (MGTSSHGLATNSSGAKVAERDGFQDVPAPGEGAAGRICGAQPVPFVPQVL) are lumenal. A glycan (N-linked (GlcNAc...) asparagine) is linked at Asn11. The chain crosses the membrane as a helical span at residues 51 to 71 (GVMIGAGVAVVVTAVLILLVV). Over 72–1365 (RRLRVPKTPA…QEPPGSATDA (1294 aa)) the chain is Cytoplasmic. Position 186-313 (186-313 (VLGHFEKPLF…VRVVQIIMVR (128 aa))) interacts with a nucleoside 3',5'-cyclic phosphate. Disordered stretches follow at residues 343–427 (FPSP…RSDF) and 441–463 (QEGASGGSLAAPARTPTQEPREQ). Position 345 is a phosphoserine (Ser345). Positions 350 to 367 (TRTSPVRGSKRMVSTSAT) are enriched in polar residues. Thr352 carries the phosphothreonine modification. A phosphoserine mark is found at Ser353 and Ser363. Positions 375-389 (GRPPDPTGAPLPGPT) are enriched in pro residues. Ser411 carries the phosphoserine modification. Position 455 is a phosphothreonine (Thr455). A nucleoside 3',5'-cyclic phosphate contacts are provided by residues 502-624 (ELAK…VAAR) and 620-740 (TVAA…LSQK). The PNPLA domain maps to 971–1137 (LVLGGGGARG…INNLPADIAR (167 aa)). Positions 975–980 (GGGARG) match the GXGXXG motif. The GXSXG signature appears at 1002 to 1006 (GTSIG). Ser1004 (nucleophile) is an active-site residue. The active-site Proton acceptor is the Asp1124. A DGA/G motif is present at residues 1124-1126 (DGG). The interval 1296-1365 (SYVSDGCADG…QEPPGSATDA (70 aa)) is disordered. Residues 1303 to 1319 (ADGEESDCLTEYEEDAG) show a composition bias toward acidic residues.

It belongs to the NTE family. Glycosylated.

Its subcellular location is the endoplasmic reticulum membrane. It carries out the reaction a 1-acyl-sn-glycero-3-phosphocholine + H2O = sn-glycerol 3-phosphocholine + a fatty acid + H(+). The enzyme catalyses 1-hexadecanoyl-sn-glycero-3-phosphocholine + H2O = sn-glycerol 3-phosphocholine + hexadecanoate + H(+). It catalyses the reaction 1-(9Z-octadecenoyl)-sn-glycero-3-phosphocholine + H2O = sn-glycerol 3-phosphocholine + (9Z)-octadecenoate + H(+). The catalysed reaction is 1-hexadecanoylglycerol + H2O = glycerol + hexadecanoate + H(+). It carries out the reaction 2-hexadecanoylglycerol + H2O = glycerol + hexadecanoate + H(+). The enzyme catalyses 1-(9Z-octadecenoyl)-glycerol + H2O = glycerol + (9Z)-octadecenoate + H(+). It catalyses the reaction 2-(9Z-octadecenoyl)-glycerol + H2O = glycerol + (9Z)-octadecenoate + H(+). The catalysed reaction is 2-(5Z,8Z,11Z,14Z-eicosatetraenoyl)-glycerol + H2O = glycerol + (5Z,8Z,11Z,14Z)-eicosatetraenoate + H(+). It carries out the reaction 1-hexadecanoyl-sn-glycero-3-phosphate + H2O = sn-glycerol 3-phosphate + hexadecanoate + H(+). With respect to regulation, inhibited by a series a OPs such as mipafox (MPX), phenyl saligenin phosphate (PSP), phenyl dipentyl phosphinate (PDPP), diisopropyl fluorophosphate and paraoxon. In terms of biological role, phospholipase B that deacylates intracellular phosphatidylcholine (PtdCho), generating glycerophosphocholine (GroPtdCho). This deacylation occurs at both sn-2 and sn-1 positions of PtdCho. Catalyzes the hydrolysis of several naturally occurring membrane-associated lipids. Hydrolyzes lysophospholipids and monoacylglycerols, preferring the 1-acyl to the 2-acyl isomer. Does not catalyze hydrolysis of di- or triacylglycerols or fatty acid amides. The chain is Patatin-like phospholipase domain-containing protein 6 (PNPLA6) from Pongo abelii (Sumatran orangutan).